A 366-amino-acid chain; its full sequence is Polyprenyl transferase AOL_s00215g276 (366 aa).

The disordered stretch occupies residues 1–22; that stretch reads MESIIARPRTRSSAKEKTQTMS. The next 7 membrane-spanning stretches (helical) occupy residues 53–73, 85–105, 137–157, 160–180, 185–205, 212–232, and 253–273; these read LHTLESLLCVYPAIWGACLSA, FLSVLFANWISMTIAHMAFCT, IIAFIVEMGLTVYISYATLGF, ALVCAPVWIASTIYPFMKRVV, LVLGPIIGMAVFPGWVSVAGN, AVPMFLATSAWVVYFDTIYAT, and HMHQFLGFLGSIQIALLSFTA. N-linked (GlcNAc...) asparagine glycosylation occurs at asparagine 277. Helical transmembrane passes span 281–301 and 312–332; these read LFWSLGVCVWGLNIPFHLLSL and VFLMNILLGLWITIVCVIELW. N-linked (GlcNAc...) asparagine glycosylation is present at asparagine 352.

The protein belongs to the UbiA prenyltransferase family. Mg(2+) serves as cofactor.

The protein resides in the membrane. Its pathway is secondary metabolite biosynthesis; terpenoid biosynthesis. Its function is as follows. Polyprenyl transferase; part of the gene cluster that mediates the biosynthesis of sesquiterpenyl epoxy-cyclohexenoids (SECs) such as anthrobotrisins and arthrosporols, metabolites that possess a novel hybrid carbon skeleton consisting of a polyketide-derived epoxycyclohexenol combined with a terpenoid-derived monocyclic sesquiterpenol substructure (PKS-PTS hybrid). The SEC pathway plays an important role for fungal soil colonization via decreasing fungal nematode-capturing ability. Within the pathway, the polyprenyl transferase catalyzes the farnesylation of toluquinol to yield farnesyl hydroquinone, the first hybrid precursor for biosynthesis of SECs, and farnesyl quinone (34) might be the key precursor for the epoxy ring formation. The pathway begins with the biosynthesis of 6-methylsalicylic acid (6-MSA), the first precursor of the polyketide-derived epoxycyclohexenol in arthrosporols, by the polyketide synthase (PKS) AOL_s00215g283 via condensation of 1 acetate and 3 malonate units. The 6-methylsalicylic acid decarboxylase AOL_s00215g281 then catalyzes the decarboxylation of 6-methylsalicylic acid to yield m-cresol. The cytochrome P450 monooxygenase AOL_s00215g282 further oxidizes m-cresol to yield toluquinol. With the assistance of the oxidoreductase AOL_s00215g277, the polyprenyl transferase AOL_s00215g276 catalyzes the farnesylation of toluquinol to produce farnesyl hydroquinone, the hybrid precursor for biosynthesis of SECs. Farnesyl hydroquinone undergoes epoxidation and then subsequent dehydrogenation to form farnesyl epoxy-quinone, the first and simplest SEC. The cytochrome P450 monooxygenase AOL_s00215g278 and the FAD-dependent monooxygenase AOL_s00215g279 might be involved in the oxygenation of the phenol moiety, most likely in the epoxy formation. The cytochrome P450 monooxygenases AOL_s00215g274 and AOL_s00215g280 are involved in specific regional ketone reductions at respectively C-4 and C-1 of farnesyl epoxy-quinone PubMed:33823587. The protein is Polyprenyl transferase AOL_s00215g276 of Arthrobotrys oligospora (strain ATCC 24927 / CBS 115.81 / DSM 1491) (Nematode-trapping fungus).